Consider the following 180-residue polypeptide: Nucleoside-triphosphatase THEP1 (180 aa).

ATP is bound by residues 9–16 and 99–106; these read GRPGIGKT and VVIVDEVG.

This sequence belongs to the THEP1 NTPase family.

The enzyme catalyses a ribonucleoside 5'-triphosphate + H2O = a ribonucleoside 5'-diphosphate + phosphate + H(+). Has nucleotide phosphatase activity towards ATP, GTP, CTP, TTP and UTP. May hydrolyze nucleoside diphosphates with lower efficiency. In Methanopyrus kandleri (strain AV19 / DSM 6324 / JCM 9639 / NBRC 100938), this protein is Nucleoside-triphosphatase THEP1.